Here is a 142-residue protein sequence, read N- to C-terminus: MAAVESVQCFGRKKTAVAVTYCRRGRGLIRLTVPIELVEPEILRYKAFEPVLLLGRSKFAGVDMRIRVKGGGNTSQIYAIRQSIAKALVAYFQKYVDEQSKKEIKDVLLRYDRTLLVADPRRCEPKKFGGRGARSRFQKSYR.

It belongs to the universal ribosomal protein uS9 family.

It is found in the cytoplasm. In Syntrichia ruralis (Great hairy screw-moss), this protein is Small ribosomal subunit protein uS9 (RPS16).